The primary structure comprises 987 residues: Mediator of RNA polymerase II transcription subunit 24 (987 aa).

Short sequence motifs (LXXLL motif) lie at residues 128-132 (LHWLL), 344-348 (LTPLL), 446-450 (LDLLL), 555-559 (LVALL), 786-790 (LPGLL), and 855-859 (LMRLL). Ser860 and Ser871 each carry phosphoserine.

The protein belongs to the Mediator complex subunit 24 family. Component of the Mediator complex, which is composed of MED1, MED4, MED6, MED7, MED8, MED9, MED10, MED11, MED12, MED13, MED13L, MED14, MED15, MED16, MED17, MED18, MED19, MED20, MED21, MED22, MED23, MED24, MED25, MED26, MED27, MED29, MED30, MED31, CCNC, CDK8 and CDC2L6/CDK11. The MED12, MED13, CCNC and CDK8 subunits form a distinct module termed the CDK8 module. Mediator containing the CDK8 module is less active than Mediator lacking this module in supporting transcriptional activation. Individual preparations of the Mediator complex lacking one or more distinct subunits have been variously termed ARC, CRSP, DRIP, PC2, SMCC and TRAP. Interacts with AR.

The protein localises to the nucleus. Functionally, component of the Mediator complex, a coactivator involved in the regulated transcription of nearly all RNA polymerase II-dependent genes. Mediator functions as a bridge to convey information from gene-specific regulatory proteins to the basal RNA polymerase II transcription machinery. Mediator is recruited to promoters by direct interactions with regulatory proteins and serves as a scaffold for the assembly of a functional preinitiation complex with RNA polymerase II and the general transcription factors. The polypeptide is Mediator of RNA polymerase II transcription subunit 24 (Med24) (Rattus norvegicus (Rat)).